Consider the following 244-residue polypeptide: Secreted RxLR effector protein RXLR-C05 (244 aa).

The signal sequence occupies residues 1 to 21; that stretch reads MRGAFYVATAFLIASSTRTAA. A compositionally biased stretch (basic and acidic residues) spans 37-46; the sequence is LPVGDSDTKS. Residues 37-56 form a disordered region; the sequence is LPVGDSDTKSLPRRSLKGSG. The RxLR-dEER signature appears at 50–68; the sequence is RSLKGSGDRLEIPVAEEER.

The protein belongs to the RxLR effector family.

It localises to the secreted. The protein localises to the host cytoplasm. It is found in the host nucleus. In terms of biological role, secreted effector that suppresses pattern-triggered immunity (PTI) in plant host. The chain is Secreted RxLR effector protein RXLR-C05 from Plasmopara halstedii (Downy mildew of sunflower).